Reading from the N-terminus, the 357-residue chain is GTPase Obg (357 aa).

Positions 1 to 159 (MKFVDEAFID…RNLKLELKVL (159 aa)) constitute an Obg domain. The OBG-type G domain maps to 160-334 (ADVGLLGMPN…LIQAIYQHVR (175 aa)). Residues 166-173 (GMPNAGKS), 191-195 (FTTLH), 213-216 (DIPG), 284-287 (NKLD), and 315-317 (SAL) contribute to the GTP site. Residues S173 and T193 each contribute to the Mg(2+) site.

It belongs to the TRAFAC class OBG-HflX-like GTPase superfamily. OBG GTPase family. In terms of assembly, monomer. Mg(2+) is required as a cofactor.

It is found in the cytoplasm. Its function is as follows. An essential GTPase which binds GTP, GDP and possibly (p)ppGpp with moderate affinity, with high nucleotide exchange rates and a fairly low GTP hydrolysis rate. Plays a role in control of the cell cycle, stress response, ribosome biogenesis and in those bacteria that undergo differentiation, in morphogenesis control. The polypeptide is GTPase Obg (Paracidovorax citrulli (strain AAC00-1) (Acidovorax citrulli)).